The following is a 523-amino-acid chain: Leucine-rich repeat transmembrane neuronal protein 1 (523 aa).

A signal peptide spans 1-34 (MDFLLLGLCLHWLLRRPSGVVLCLLGACFQMLPA). The LRRNT domain occupies 35 to 63 (APSGCPGQCRCEGRLLYCEALNLTEAPHN). Over 35–428 (APSGCPGQCR…HAENAVQIHK (394 aa)) the chain is Extracellular. N-linked (GlcNAc...) asparagine glycans are attached at residues asparagine 56 and asparagine 63. LRR repeat units follow at residues 64 to 87 (LSGL…QFTG), 89 to 111 (MQLT…AFQK), 112 to 135 (LRRV…TFRP), 136 to 159 (MPNL…LFHG), 161 to 183 (RKLT…IFQD), 184 to 207 (CRSL…SFAG), 209 to 231 (FKLT…HFPR), 233 to 255 (ISLN…LDWV), 256 to 278 (WNLE…VFET), and 280 to 302 (PYLQ…ILNS). Asparagine 130 is a glycosylation site (N-linked (GlcNAc...) asparagine). The region spanning 314 to 365 (NLWDCGRNVCALASWLSNFQGRYDANLQCASPEYAQGEDVLDAVYAFHLCED) is the LRRCT domain. Residue asparagine 381 is glycosylated (N-linked (GlcNAc...) asparagine). A helical membrane pass occupies residues 429-449 (VVTGTMALIFSFLIVVLVLYV). Residues 450-523 (SWKCFPASLR…HQQPARECEV (74 aa)) are Cytoplasmic-facing. Positions 520–523 (ECEV) match the May be involved in DLG4-binding motif.

Belongs to the LRRTM family. As to quaternary structure, interacts with DLG4.

The protein resides in the cell membrane. It localises to the postsynaptic cell membrane. Its function is as follows. Exhibits strong synaptogenic activity, restricted to excitatory presynaptic differentiation, acting at both pre- and postsynaptic level. This chain is Leucine-rich repeat transmembrane neuronal protein 1 (Lrrtm1), found in Rattus norvegicus (Rat).